The sequence spans 155 residues: Ribosomal RNA large subunit methyltransferase H (155 aa).

Residues glycine 104 and 123 to 128 (LSRLTL) each bind S-adenosyl-L-methionine.

Belongs to the RNA methyltransferase RlmH family. Homodimer.

It localises to the cytoplasm. It catalyses the reaction pseudouridine(1915) in 23S rRNA + S-adenosyl-L-methionine = N(3)-methylpseudouridine(1915) in 23S rRNA + S-adenosyl-L-homocysteine + H(+). Functionally, specifically methylates the pseudouridine at position 1915 (m3Psi1915) in 23S rRNA. The sequence is that of Ribosomal RNA large subunit methyltransferase H from Marinomonas sp. (strain MWYL1).